The chain runs to 335 residues: tRNA pseudouridine synthase D (335 aa).

D77 (nucleophile) is an active-site residue. The region spanning 152–308 is the TRUD domain; sequence GFPNYFTEQR…AQHLSWSFIP (157 aa).

Belongs to the pseudouridine synthase TruD family.

It carries out the reaction uridine(13) in tRNA = pseudouridine(13) in tRNA. Functionally, responsible for synthesis of pseudouridine from uracil-13 in transfer RNAs. The polypeptide is tRNA pseudouridine synthase D (Histophilus somni (strain 129Pt) (Haemophilus somnus)).